The following is a 115-amino-acid chain: Hydrogenase maturation factor HypA (115 aa).

Residue His-2 coordinates Ni(2+). Cys-73, Cys-76, Cys-89, and Cys-92 together coordinate Zn(2+).

Belongs to the HypA/HybF family.

Involved in the maturation of [NiFe] hydrogenases. Required for nickel insertion into the metal center of the hydrogenase. The protein is Hydrogenase maturation factor HypA of Polaromonas naphthalenivorans (strain CJ2).